The chain runs to 164 residues: Type II secretion system protein M (164 aa).

Over 1 to 17 (MNELRQRWQAMSQRERQ) the chain is Cytoplasmic. Residues 18-38 (LMVVCAAVLLLCVVYYAILQP) form a helical membrane-spanning segment. At 39-164 (WQEREDLWER…RLMLERTDEA (126 aa)) the chain is on the periplasmic side.

It belongs to the GSP M family. As to quaternary structure, type II secretion system is composed of four main components: the outer membrane complex, the inner membrane complex, the cytoplasmic secretion ATPase and the periplasm-spanning pseudopilus. Forms homodimers. Interacts with OutL/GspL. Interacts with OutE/GspE and OutF/GspF.

The protein resides in the cell inner membrane. Inner membrane component of the type II secretion system required for the energy-dependent secretion of extracellular factors such as proteases and toxins from the periplasm. Plays a role in the complex assembly and recruits OutL resulting in a stable complex in the inner membrane. Provides thus a link between the energy-providing OutE protein in the cytoplasm and the rest of the T2SS machinery. This is Type II secretion system protein M (outM) from Pectobacterium carotovorum subsp. carotovorum (Erwinia carotovora subsp. carotovora).